Consider the following 253-residue polypeptide: 5'/3'-nucleotidase SurE (253 aa).

A divalent metal cation is bound by residues D8, D9, S39, and N92.

The protein belongs to the SurE nucleotidase family. The cofactor is a divalent metal cation.

It is found in the cytoplasm. It catalyses the reaction a ribonucleoside 5'-phosphate + H2O = a ribonucleoside + phosphate. It carries out the reaction a ribonucleoside 3'-phosphate + H2O = a ribonucleoside + phosphate. The enzyme catalyses [phosphate](n) + H2O = [phosphate](n-1) + phosphate + H(+). Its function is as follows. Nucleotidase with a broad substrate specificity as it can dephosphorylate various ribo- and deoxyribonucleoside 5'-monophosphates and ribonucleoside 3'-monophosphates with highest affinity to 3'-AMP. Also hydrolyzes polyphosphate (exopolyphosphatase activity) with the preference for short-chain-length substrates (P20-25). Might be involved in the regulation of dNTP and NTP pools, and in the turnover of 3'-mononucleotides produced by numerous intracellular RNases (T1, T2, and F) during the degradation of various RNAs. The polypeptide is 5'/3'-nucleotidase SurE (Escherichia coli O17:K52:H18 (strain UMN026 / ExPEC)).